The following is a 436-amino-acid chain: Glutamate-1-semialdehyde 2,1-aminomutase (436 aa).

An N6-(pyridoxal phosphate)lysine modification is found at Lys-272.

Belongs to the class-III pyridoxal-phosphate-dependent aminotransferase family. HemL subfamily. Homodimer. Pyridoxal 5'-phosphate is required as a cofactor.

Its subcellular location is the cytoplasm. The enzyme catalyses (S)-4-amino-5-oxopentanoate = 5-aminolevulinate. Its pathway is porphyrin-containing compound metabolism; protoporphyrin-IX biosynthesis; 5-aminolevulinate from L-glutamyl-tRNA(Glu): step 2/2. It functions in the pathway porphyrin-containing compound metabolism; chlorophyll biosynthesis. This Methylibium petroleiphilum (strain ATCC BAA-1232 / LMG 22953 / PM1) protein is Glutamate-1-semialdehyde 2,1-aminomutase.